The primary structure comprises 933 residues: Bromodomain testis-specific protein (933 aa).

Residues 1–21 (MSMSSRHLHSSIVNPPPPEYI) are disordered. The Bromo 1 domain maps to 28-134 (RLTNQLQYLE…KVFMEKIAEM (107 aa)). The short motif at 214 to 225 (KGIKRKADTTTP) is the Nuclear localization signal element. Positions 235–263 (ESSPTLSEPKPNKILSGTEKTRSAETSAV) are disordered. Residues 278–385 (NQICEQLKHC…DVFEGMFAKI (108 aa)) form the Bromo 2 domain. Disordered regions lie at residues 398–425 (RYKT…DERA), 576–610 (KPSS…QLSS), and 627–662 (GGPS…ESAT). Low complexity predominate over residues 404 to 418 (EESSSSSSSEQSSSS). A coiled-coil region spans residues 423–448 (ERAQHLALLQEQLRAVQEQLKALTET). The 83-residue stretch at 495–577 (VSDEEEDVKP…VCLRKRPKKP (83 aa)) folds into the NET domain. Positions 584–603 (KSKEQLNKEKKQELEKRLRD) are enriched in basic and acidic residues. Positions 630-660 (SRLSESSTSSSASDVSNSSDSSSSDSSDSES) are enriched in low complexity. A coiled-coil region spans residues 829–917 (AKEERERALK…RREAMAGTID (89 aa)).

The protein belongs to the BET family.

The protein resides in the nucleus. Its function is as follows. Testis-specific chromatin protein that specifically binds histone H4 acetylated at 'Lys-5' and 'Lys-8' (H4K5ac and H4K8ac, respectively) and plays a key role in spermatogenesis. Required in late pachytene spermatocytes: plays a role in meiotic and post-meiotic cells by binding to acetylated histones at the promoter of specific meiotic and post-meiotic genes, facilitating their activation at the appropriate time. In the post-meiotic phase of spermatogenesis, binds to hyperacetylated histones and participates in their general removal from DNA. Also recognizes and binds a subset of butyrylated histones: able to bind histone H4 butyrylated at 'Lys-8' (H4K8ac), while it is not able to bind H4 butyrylated at 'Lys-5' (H4K5ac). The protein is Bromodomain testis-specific protein (brdt) of Xenopus tropicalis (Western clawed frog).